Reading from the N-terminus, the 208-residue chain is uncharacterized protein (208 aa).

The protein to E.coli YfjJ.

This is an uncharacterized protein from Escherichia coli (strain K12).